The sequence spans 124 residues: Putative B3 domain-containing protein At1g51970 (124 aa).

A DNA-binding region (TF-B3) is located at residues 18–124 (VLKKNLTESD…SRRFLFHHIN (107 aa)).

Its subcellular location is the nucleus. In Arabidopsis thaliana (Mouse-ear cress), this protein is Putative B3 domain-containing protein At1g51970.